The chain runs to 335 residues: Pregnancy-specific beta-1-glycoprotein 5 (335 aa).

Residues 1–34 (MGPLSAPPCTQHITWKGLLLTASLLNFWNLPITA) form the signal peptide. Positions 35–144 (QVTIEALPPK…TGYFTFNLYL (110 aa)) constitute an Ig-like V-type domain. Residues Asn104 and Asn111 are each glycosylated (N-linked (GlcNAc...) asparagine). The short motif at 127–129 (RGD) is the Cell attachment site element. 2 consecutive Ig-like C2-type domains span residues 147–234 (PKPY…VTLN) and 239–317 (PDLP…KSMT). Intrachain disulfides connect Cys169–Cys217 and Cys261–Cys301. N-linked (GlcNAc...) asparagine glycosylation is found at Asn175 and Asn210.

This sequence belongs to the immunoglobulin superfamily. CEA family. In terms of tissue distribution, synthesized by syncytiotrophoblast of the placenta.

Its subcellular location is the secreted. The sequence is that of Pregnancy-specific beta-1-glycoprotein 5 (PSG5) from Homo sapiens (Human).